Here is a 234-residue protein sequence, read N- to C-terminus: Putative ankyrin repeat protein RF_0063 (234 aa).

ANK repeat units lie at residues 149–180 (NNNT…TISI) and 184–213 (YNNT…QKAL).

The protein is Putative ankyrin repeat protein RF_0063 of Rickettsia felis (strain ATCC VR-1525 / URRWXCal2) (Rickettsia azadi).